Consider the following 519-residue polypeptide: Berghepain-1 (519 aa).

Topologically, residues Met-1 to Thr-32 are cytoplasmic. A helical; Signal-anchor for type II membrane protein transmembrane segment spans residues Ile-33–Phe-53. Over Lys-54–Leu-519 the chain is Lumenal. N-linked (GlcNAc...) asparagine glycosylation is found at Asn-55 and Asn-143. Intrachain disulfides connect Cys-298-Cys-340, Cys-333-Cys-373, Cys-358-Cys-378, and Cys-427-Cys-508. Residue Cys-301 is part of the active site. The N-linked (GlcNAc...) asparagine glycan is linked to Asn-432. Residues His-433 and Asn-483 contribute to the active site.

It belongs to the peptidase C1 family.

The protein localises to the membrane. Its function is as follows. Cysteine protease. Required for host hepatocyte-derived merozoite infectivity and to a lesser extent for host erythrocyte-derived merozoite infectivity. This is Berghepain-1 from Plasmodium berghei (strain Anka).